The following is a 185-amino-acid chain: MMQTTVRGEVVEPYAEALLSLAQTHNLIDQFQQDTQLMVELVASSGELQQFLANPLIKPEAKKNVLRQLTVDKVHGYFLNFLMLLVDRRRINFLSSICEHYRALVRKLRNVALAEVTSAVELNDDQRRAVVEKVKTMTGAADVELVTACDPELIGGVVIKVGSQIFDASLRGQLRRLSVTLAQAT.

Belongs to the ATPase delta chain family. In terms of assembly, F-type ATPases have 2 components, F(1) - the catalytic core - and F(0) - the membrane proton channel. F(1) has five subunits: alpha(3), beta(3), gamma(1), delta(1), epsilon(1). CF(0) has four main subunits: a(1), b(1), b'(1) and c(10-14). The alpha and beta chains form an alternating ring which encloses part of the gamma chain. F(1) is attached to F(0) by a central stalk formed by the gamma and epsilon chains, while a peripheral stalk is formed by the delta, b and b' chains.

Its subcellular location is the cellular thylakoid membrane. In terms of biological role, f(1)F(0) ATP synthase produces ATP from ADP in the presence of a proton or sodium gradient. F-type ATPases consist of two structural domains, F(1) containing the extramembraneous catalytic core and F(0) containing the membrane proton channel, linked together by a central stalk and a peripheral stalk. During catalysis, ATP synthesis in the catalytic domain of F(1) is coupled via a rotary mechanism of the central stalk subunits to proton translocation. This protein is part of the stalk that links CF(0) to CF(1). It either transmits conformational changes from CF(0) to CF(1) or is implicated in proton conduction. Its function is as follows. The complex from the organism is particularly stable to disruption and remains functional after 6 hrs at 55 degrees Celsius. The protein is ATP synthase subunit delta of Thermosynechococcus vestitus (strain NIES-2133 / IAM M-273 / BP-1).